Reading from the N-terminus, the 305-residue chain is Methionyl-tRNA formyltransferase (305 aa).

(6S)-5,6,7,8-tetrahydrofolate is bound at residue 111-114 (SLLP).

The protein belongs to the Fmt family.

It carries out the reaction L-methionyl-tRNA(fMet) + (6R)-10-formyltetrahydrofolate = N-formyl-L-methionyl-tRNA(fMet) + (6S)-5,6,7,8-tetrahydrofolate + H(+). In terms of biological role, attaches a formyl group to the free amino group of methionyl-tRNA(fMet). The formyl group appears to play a dual role in the initiator identity of N-formylmethionyl-tRNA by promoting its recognition by IF2 and preventing the misappropriation of this tRNA by the elongation apparatus. The sequence is that of Methionyl-tRNA formyltransferase from Campylobacter jejuni subsp. doylei (strain ATCC BAA-1458 / RM4099 / 269.97).